The sequence spans 907 residues: Envelope glycoprotein B (907 aa).

The first 24 residues, 1-24 (MESRIWCLVVCVNLCIVCLGAAVS), serve as a signal peptide directing secretion. The Virion surface segment spans residues 25–751 (SSSTRGTSAT…EGVATFLKNP (727 aa)). The interval 29-62 (RGTSATHSHHSSHTTSAAHSRSGSVSQRVTSSQT) is disordered. Residues 41–62 (HTTSAAHSRSGSVSQRVTSSQT) show a composition bias toward low complexity. N-linked (GlcNAc...) asparagine; by host glycans are attached at residues asparagine 68, asparagine 73, and asparagine 85. Disulfide bonds link cysteine 94–cysteine 551, cysteine 111–cysteine 507, cysteine 185–cysteine 250, and cysteine 344–cysteine 391. Residues 152–158 (SYAYIHT) form an involved in fusion and/or binding to host membrane region. Asparagine 208 carries an N-linked (GlcNAc...) asparagine; by host glycan. The tract at residues 237–244 (GSTWLYRE) is involved in fusion and/or binding to host membrane. Asparagine 281, asparagine 286, asparagine 302, asparagine 341, asparagine 383, asparagine 405, asparagine 409, asparagine 417, asparagine 447, asparagine 452, asparagine 456, asparagine 466, asparagine 555, and asparagine 586 each carry an N-linked (GlcNAc...) asparagine; by host glycan. A disulfide bridge links cysteine 574 with cysteine 611. Positions 697–749 (VEDKVVDPLPPYLKGLDDLMSGLGAAGKAVGVAIGAVGGAVASVVEGVATFLK) are hydrophobic membrane proximal region. Residues 752 to 772 (FGAFTIILVAIAVVIITYLIY) traverse the membrane as a helical segment. Residues 773 to 907 (TRQRRLCTQP…LKDSDEEENV (135 aa)) lie on the Intravirion side of the membrane. Composition is skewed to polar residues over residues 798-810 (VTSG…SLQA) and 860-877 (RAQQ…GTQD). 2 disordered regions span residues 798 to 838 (VTSG…TAAP) and 857 to 907 (AEQR…EENV). Residues 878 to 887 (KGQKPNLLDR) are compositionally biased toward basic and acidic residues. The Internalization motif motif lies at 895–898 (YRHL).

It belongs to the herpesviridae glycoprotein B family. Homotrimer; disulfide-linked. Binds to heparan sulfate proteoglycans. Interacts with gH/gL heterodimer. Post-translationally, a proteolytic cleavage by host furin generates two subunits that remain linked by disulfide bonds.

Its subcellular location is the virion membrane. The protein resides in the host cell membrane. The protein localises to the host endosome membrane. It is found in the host Golgi apparatus membrane. Functionally, envelope glycoprotein that forms spikes at the surface of virion envelope. Essential for the initial attachment to heparan sulfate moieties of the host cell surface proteoglycans. Involved in fusion of viral and cellular membranes leading to virus entry into the host cell. Following initial binding to its host receptors, membrane fusion is mediated by the fusion machinery composed at least of gB and the heterodimer gH/gL. May be involved in the fusion between the virion envelope and the outer nuclear membrane during virion egress. This chain is Envelope glycoprotein B, found in Human cytomegalovirus (strain Merlin) (HHV-5).